Here is a 924-residue protein sequence, read N- to C-terminus: Periplasmic nitrate reductase (924 aa).

A signal peptide (tat-type signal) is located at residues 1–29; sequence MNRRDFIKNTAIASACGVAGLSVPSSVLA. One can recognise a 4Fe-4S Mo/W bis-MGD-type domain in the interval 35–91; it reads WRWDKAVCRFCGTGCGILVARQDGKIVAVKGDPAAPVNRGLNCIKGYFNAKIMYGED. [4Fe-4S] cluster is bound by residues Cys-42, Cys-45, Cys-49, and Cys-77. Residues Lys-79, Gln-147, Asn-172, Cys-176, 209-216, Met-417, Gln-421, Asn-527, 552-553, Lys-575, Asp-602, and 814-823 each bind Mo-bis(molybdopterin guanine dinucleotide); these read WGANMAEM, SD, and TGRVLEHWHS. Substrate is bound at residue Trp-890. 2 residues coordinate Mo-bis(molybdopterin guanine dinucleotide): Asn-898 and Lys-915.

This sequence belongs to the prokaryotic molybdopterin-containing oxidoreductase family. NasA/NapA/NarB subfamily. Component of the periplasmic nitrate reductase NapAB complex composed of NapA and NapB. The cofactor is [4Fe-4S] cluster. Mo-bis(molybdopterin guanine dinucleotide) is required as a cofactor. In terms of processing, predicted to be exported by the Tat system. The position of the signal peptide cleavage has not been experimentally proven.

It localises to the periplasm. It catalyses the reaction 2 Fe(II)-[cytochrome] + nitrate + 2 H(+) = 2 Fe(III)-[cytochrome] + nitrite + H2O. In terms of biological role, catalytic subunit of the periplasmic nitrate reductase complex NapAB. Receives electrons from NapB and catalyzes the reduction of nitrate to nitrite. This Campylobacter lari (strain RM2100 / D67 / ATCC BAA-1060) protein is Periplasmic nitrate reductase.